Here is a 713-residue protein sequence, read N- to C-terminus: Polyribonucleotide nucleotidyltransferase (713 aa).

Mg(2+)-binding residues include D493 and D499. Residues 560 to 619 (PRMITIKINPEKIRDVIGKGGSVIRALTEETGTTIDISDDGVVTIASTNSEGMAEAKKRI) enclose the KH domain. The region spanning 629 to 697 (GHVYEGTVLK…EKGRVRLSAK (69 aa)) is the S1 motif domain.

The protein belongs to the polyribonucleotide nucleotidyltransferase family. Requires Mg(2+) as cofactor.

Its subcellular location is the cytoplasm. The enzyme catalyses RNA(n+1) + phosphate = RNA(n) + a ribonucleoside 5'-diphosphate. Its function is as follows. Involved in mRNA degradation. Catalyzes the phosphorolysis of single-stranded polyribonucleotides processively in the 3'- to 5'-direction. This Burkholderia pseudomallei (strain 1106a) protein is Polyribonucleotide nucleotidyltransferase.